A 434-amino-acid chain; its full sequence is Lipoyl synthase, mitochondrial (434 aa).

The N-terminal 31 residues, 1–31 (MAASARGLRTLQSAHSSTTVPRLQLAVSRCY), are a transit peptide targeting the mitochondrion. Residues 34-54 (TTSPDPPITNSSNSSNSTPTP) show a composition bias toward low complexity. Positions 34 to 55 (TTSPDPPITNSSNSSNSTPTPK) are disordered. [4Fe-4S] cluster contacts are provided by Cys144, Cys149, Cys155, Cys175, Cys179, Cys182, and Ser390. Residues 158–379 (GSSKSAATAT…KERALEMGFL (222 aa)) form the Radical SAM core domain.

The protein belongs to the radical SAM superfamily. Lipoyl synthase family. Requires [4Fe-4S] cluster as cofactor.

Its subcellular location is the mitochondrion. It carries out the reaction [[Fe-S] cluster scaffold protein carrying a second [4Fe-4S](2+) cluster] + N(6)-octanoyl-L-lysyl-[protein] + 2 oxidized [2Fe-2S]-[ferredoxin] + 2 S-adenosyl-L-methionine + 4 H(+) = [[Fe-S] cluster scaffold protein] + N(6)-[(R)-dihydrolipoyl]-L-lysyl-[protein] + 4 Fe(3+) + 2 hydrogen sulfide + 2 5'-deoxyadenosine + 2 L-methionine + 2 reduced [2Fe-2S]-[ferredoxin]. It functions in the pathway protein modification; protein lipoylation via endogenous pathway; protein N(6)-(lipoyl)lysine from octanoyl-[acyl-carrier-protein]: step 2/2. Functionally, catalyzes the radical-mediated insertion of two sulfur atoms into the C-6 and C-8 positions of the octanoyl moiety bound to the lipoyl domains of lipoate-dependent enzymes, thereby converting the octanoylated domains into lipoylated derivatives. In Paracoccidioides brasiliensis (strain Pb03), this protein is Lipoyl synthase, mitochondrial.